Consider the following 415-residue polypeptide: Serine hydroxymethyltransferase (415 aa).

(6S)-5,6,7,8-tetrahydrofolate-binding positions include leucine 121 and 125–127 (GHL). Position 229 is an N6-(pyridoxal phosphate)lysine (lysine 229). 352-354 (SPF) is a binding site for (6S)-5,6,7,8-tetrahydrofolate.

This sequence belongs to the SHMT family. As to quaternary structure, homodimer. Pyridoxal 5'-phosphate serves as cofactor.

It is found in the cytoplasm. The catalysed reaction is (6R)-5,10-methylene-5,6,7,8-tetrahydrofolate + glycine + H2O = (6S)-5,6,7,8-tetrahydrofolate + L-serine. The protein operates within one-carbon metabolism; tetrahydrofolate interconversion. Its pathway is amino-acid biosynthesis; glycine biosynthesis; glycine from L-serine: step 1/1. Catalyzes the reversible interconversion of serine and glycine with tetrahydrofolate (THF) serving as the one-carbon carrier. This reaction serves as the major source of one-carbon groups required for the biosynthesis of purines, thymidylate, methionine, and other important biomolecules. Also exhibits THF-independent aldolase activity toward beta-hydroxyamino acids, producing glycine and aldehydes, via a retro-aldol mechanism. This chain is Serine hydroxymethyltransferase, found in Methylobacillus flagellatus (strain ATCC 51484 / DSM 6875 / VKM B-1610 / KT).